Here is a 141-residue protein sequence, read N- to C-terminus: Hemoglobin subunit alpha-1/2 (141 aa).

The Globin domain occupies 1-141 (VLSPADKTNV…VSTVLTSKYR (141 aa)). At Ser3 the chain carries Phosphoserine. Lys7 bears the N6-succinyllysine mark. Residue Thr8 is modified to Phosphothreonine. Lys11 carries the N6-succinyllysine modification. At Lys16 the chain carries N6-acetyllysine; alternate. Lys16 carries the post-translational modification N6-succinyllysine; alternate. Position 24 is a phosphotyrosine (Tyr24). At Ser35 the chain carries Phosphoserine. The residue at position 40 (Lys40) is an N6-succinyllysine. Position 49 is a phosphoserine (Ser49). His58 contributes to the O2 binding site. Heme b is bound at residue His87. At Ser102 the chain carries Phosphoserine. Thr108 bears the Phosphothreonine mark. At Ser124 the chain carries Phosphoserine. Thr134 and Thr137 each carry phosphothreonine. Ser138 carries the phosphoserine modification.

Belongs to the globin family. As to quaternary structure, heterotetramer of two alpha chains and two beta chains. As to expression, red blood cells.

Involved in oxygen transport from the lung to the various peripheral tissues. The chain is Hemoglobin subunit alpha-1/2 from Mustela lutreola (European mink).